Here is a 271-residue protein sequence, read N- to C-terminus: S-adenosylmethionine decarboxylase proenzyme (271 aa).

Serine 121 (schiff-base intermediate with substrate; via pyruvic acid) is an active-site residue. Serine 121 bears the Pyruvic acid (Ser); by autocatalysis mark. The active-site Proton acceptor; for processing activity is histidine 126. Cysteine 149 (proton donor; for catalytic activity) is an active-site residue.

Belongs to the prokaryotic AdoMetDC family. Type 2 subfamily. As to quaternary structure, heterooctamer of four alpha and four beta chains arranged as a tetramer of alpha/beta heterodimers. Pyruvate is required as a cofactor. Post-translationally, is synthesized initially as an inactive proenzyme. Formation of the active enzyme involves a self-maturation process in which the active site pyruvoyl group is generated from an internal serine residue via an autocatalytic post-translational modification. Two non-identical subunits are generated from the proenzyme in this reaction, and the pyruvate is formed at the N-terminus of the alpha chain, which is derived from the carboxyl end of the proenzyme. The post-translation cleavage follows an unusual pathway, termed non-hydrolytic serinolysis, in which the side chain hydroxyl group of the serine supplies its oxygen atom to form the C-terminus of the beta chain, while the remainder of the serine residue undergoes an oxidative deamination to produce ammonia and the pyruvoyl group blocking the N-terminus of the alpha chain.

It carries out the reaction S-adenosyl-L-methionine + H(+) = S-adenosyl 3-(methylsulfanyl)propylamine + CO2. It participates in amine and polyamine biosynthesis; S-adenosylmethioninamine biosynthesis; S-adenosylmethioninamine from S-adenosyl-L-methionine: step 1/1. In terms of biological role, catalyzes the decarboxylation of S-adenosylmethionine to S-adenosylmethioninamine (dcAdoMet), the propylamine donor required for the synthesis of the polyamines spermine and spermidine from the diamine putrescine. This Clostridium perfringens (strain ATCC 13124 / DSM 756 / JCM 1290 / NCIMB 6125 / NCTC 8237 / Type A) protein is S-adenosylmethionine decarboxylase proenzyme.